The following is a 732-amino-acid chain: S-adenosyl-L-methionine-dependent tRNA 4-demethylwyosine synthase TYW1 (732 aa).

The region spanning 79–237 (VKIFYGSQTG…DFRAWKTKFI (159 aa)) is the Flavodoxin-like domain. FMN contacts are provided by residues 85-89 (SQTGT) and 176-208 (VFGLGNSAYASHFNKVGKNVDKWLWMLGAHRVM). The disordered stretch occupies residues 248–314 (RKKSCGGHCK…HQSLNSIVDV (67 aa)). Residues 259 to 286 (GKCESHQHGSEEREEGSHEQDELHHRDT) show a composition bias toward basic and acidic residues. Residues 287-301 (EEEEPFESSSEEEFG) show a composition bias toward acidic residues. The Radical SAM core domain occupies 400 to 644 (YGIESHRCME…VDLIPEYEIA (245 aa)). Residues Cys-416, Cys-420, and Cys-423 each contribute to the [4Fe-4S] cluster site.

It belongs to the TYW1 family. [4Fe-4S] cluster serves as cofactor.

It carries out the reaction N(1)-methylguanosine(37) in tRNA(Phe) + pyruvate + S-adenosyl-L-methionine = 4-demethylwyosine(37) in tRNA(Phe) + 5'-deoxyadenosine + L-methionine + CO2 + H2O. The protein operates within tRNA modification; wybutosine-tRNA(Phe) biosynthesis. In terms of biological role, probable component of the wybutosine biosynthesis pathway. Wybutosine is a hyper modified guanosine with a tricyclic base found at the 3'-position adjacent to the anticodon of eukaryotic phenylalanine tRNA. Catalyzes the condensation of N-methylguanine with 2 carbon atoms from pyruvate to form the tricyclic 4-demethylwyosine, an intermediate in wybutosine biosynthesis. This chain is S-adenosyl-L-methionine-dependent tRNA 4-demethylwyosine synthase TYW1 (TYW1), found in Homo sapiens (Human).